The primary structure comprises 313 residues: Aspartate carbamoyltransferase catalytic subunit (313 aa).

Residues arginine 54 and threonine 55 each coordinate carbamoyl phosphate. Lysine 82 lines the L-aspartate pocket. Carbamoyl phosphate is bound by residues arginine 104, histidine 132, and glutamine 135. L-aspartate is bound by residues arginine 165 and arginine 219. 2 residues coordinate carbamoyl phosphate: glycine 260 and proline 261.

This sequence belongs to the aspartate/ornithine carbamoyltransferase superfamily. ATCase family. In terms of assembly, heterododecamer (2C3:3R2) of six catalytic PyrB chains organized as two trimers (C3), and six regulatory PyrI chains organized as three dimers (R2).

It catalyses the reaction carbamoyl phosphate + L-aspartate = N-carbamoyl-L-aspartate + phosphate + H(+). It participates in pyrimidine metabolism; UMP biosynthesis via de novo pathway; (S)-dihydroorotate from bicarbonate: step 2/3. Its function is as follows. Catalyzes the condensation of carbamoyl phosphate and aspartate to form carbamoyl aspartate and inorganic phosphate, the committed step in the de novo pyrimidine nucleotide biosynthesis pathway. The protein is Aspartate carbamoyltransferase catalytic subunit of Thermobifida fusca (strain YX).